The following is a 584-amino-acid chain: Aspartate--tRNA ligase (584 aa).

Glu-169 is an L-aspartate binding site. Positions 193-196 (QLFK) are aspartate. L-aspartate is bound at residue Arg-215. ATP contacts are provided by residues 215-217 (RDE) and Gln-224. His-446 is an L-aspartate binding site. Residue Glu-480 coordinates ATP. L-aspartate is bound at residue Arg-487. Residue 532–535 (GLDR) coordinates ATP.

The protein belongs to the class-II aminoacyl-tRNA synthetase family. Type 1 subfamily. In terms of assembly, homodimer.

It localises to the cytoplasm. It catalyses the reaction tRNA(Asp) + L-aspartate + ATP = L-aspartyl-tRNA(Asp) + AMP + diphosphate. Its function is as follows. Catalyzes the attachment of L-aspartate to tRNA(Asp) in a two-step reaction: L-aspartate is first activated by ATP to form Asp-AMP and then transferred to the acceptor end of tRNA(Asp). This chain is Aspartate--tRNA ligase, found in Buchnera aphidicola subsp. Schizaphis graminum (strain Sg).